The sequence spans 93 residues: U12-lycotoxin-Ls1a (93 aa).

Positions 1-18 (MKFAVILLFSLVVLAVAS) are cleaved as a signal peptide. A propeptide spanning residues 19–38 (ESVEEVRREIDIEDLPEQQR) is cleaved from the precursor.

It belongs to the neurotoxin 31 family. Post-translationally, contains 5 disulfide bonds. In terms of tissue distribution, expressed by the venom gland.

It localises to the secreted. The chain is U12-lycotoxin-Ls1a from Lycosa singoriensis (Wolf spider).